The chain runs to 212 residues: Protein irg-1 (212 aa).

As to expression, expressed in the intestine.

In terms of biological role, plays a role in innate immunity by conferring resistance to virulent strains of the Gram-negative bacterium P.aeruginosa via the zip-2 pathway. Can act independently of several immunity-related pathways including pmk-1 p38MAPK, dbl-1 TGF-beta, kgb-1 JNK and bar-1/beta-catenin pathways. This is Protein irg-1 from Caenorhabditis elegans.